Reading from the N-terminus, the 364-residue chain is Anthranilate phosphoribosyltransferase (364 aa).

5-phospho-alpha-D-ribose 1-diphosphate is bound by residues G101, 104-105 (GD), T109, 111-114 (NLST), 129-137 (KHGNRAASS), and G141. G101 is an anthranilate binding site. S113 contacts Mg(2+). Residue N132 participates in anthranilate binding. R187 contributes to the anthranilate binding site. 2 residues coordinate Mg(2+): D245 and E246.

It belongs to the anthranilate phosphoribosyltransferase family. In terms of assembly, homodimer. Requires Mg(2+) as cofactor.

It carries out the reaction N-(5-phospho-beta-D-ribosyl)anthranilate + diphosphate = 5-phospho-alpha-D-ribose 1-diphosphate + anthranilate. The protein operates within amino-acid biosynthesis; L-tryptophan biosynthesis; L-tryptophan from chorismate: step 2/5. Its function is as follows. Catalyzes the transfer of the phosphoribosyl group of 5-phosphorylribose-1-pyrophosphate (PRPP) to anthranilate to yield N-(5'-phosphoribosyl)-anthranilate (PRA). In Mycolicibacterium gilvum (strain PYR-GCK) (Mycobacterium gilvum (strain PYR-GCK)), this protein is Anthranilate phosphoribosyltransferase.